The sequence spans 92 residues: Small ribosomal subunit protein bS20 (92 aa).

Residues Met-1–Leu-24 form a disordered region.

This sequence belongs to the bacterial ribosomal protein bS20 family.

Functionally, binds directly to 16S ribosomal RNA. In Paraburkholderia xenovorans (strain LB400), this protein is Small ribosomal subunit protein bS20.